Here is a 389-residue protein sequence, read N- to C-terminus: Mannitol-1-phosphate 5-dehydrogenase (389 aa).

7–18 (AVHFGGGNIGRG) lines the NAD(+) pocket. Residue Lys-216 is part of the active site.

This sequence belongs to the mannitol dehydrogenase family. Monomer.

It catalyses the reaction D-mannitol 1-phosphate + NAD(+) = beta-D-fructose 6-phosphate + NADH + H(+). Catalyzes the NAD(H)-dependent interconversion of D-fructose 6-phosphate and D-mannitol 1-phosphate in the mannitol metabolic pathway. The chain is Mannitol-1-phosphate 5-dehydrogenase from Pyrenophora tritici-repentis (strain Pt-1C-BFP) (Wheat tan spot fungus).